A 428-amino-acid polypeptide reads, in one-letter code: Tyrosine--tRNA ligase (428 aa).

Y36 provides a ligand contact to L-tyrosine. The 'HIGH' region motif lies at 41 to 50; that stretch reads PTAPSLHAGH. Residues Y171 and Q175 each contribute to the L-tyrosine site. The 'KMSKS' region motif lies at 231–235; sequence KFGKS. K234 is a binding site for ATP. In terms of domain architecture, S4 RNA-binding spans 359–416; that stretch reads DSIVDLLVETGLAASKGAARRNVAEGGVYVNNIRIESDEWIPQHSDFLHERWLVLRRG.

The protein belongs to the class-I aminoacyl-tRNA synthetase family. TyrS type 1 subfamily. In terms of assembly, homodimer.

It localises to the cytoplasm. The catalysed reaction is tRNA(Tyr) + L-tyrosine + ATP = L-tyrosyl-tRNA(Tyr) + AMP + diphosphate + H(+). Functionally, catalyzes the attachment of tyrosine to tRNA(Tyr) in a two-step reaction: tyrosine is first activated by ATP to form Tyr-AMP and then transferred to the acceptor end of tRNA(Tyr). The polypeptide is Tyrosine--tRNA ligase (Mycolicibacterium fortuitum (Mycobacterium fortuitum)).